A 375-amino-acid chain; its full sequence is Trichodiene synthase (375 aa).

Belongs to the trichodiene synthase family.

The catalysed reaction is (2E,6E)-farnesyl diphosphate = trichodiene + diphosphate. The protein operates within sesquiterpene biosynthesis; trichothecene biosynthesis. In terms of biological role, TS is a member of the terpene cyclase group of enzymes. It catalyzes the isomerization and cyclization of farnesyl pyro-phosphate to form trichodiene, the first cyclic intermediate in the biosynthetic pathway for trichothecenes. It serves to branch trichothecene biosynthesis from the isoprenoid pathway. This Fusarium acaciae-mearnsii protein is Trichodiene synthase (TRI5).